The sequence spans 124 residues: Small ribosomal subunit protein uS12 (124 aa).

A 3-methylthioaspartic acid modification is found at aspartate 90.

The protein belongs to the universal ribosomal protein uS12 family. In terms of assembly, part of the 30S ribosomal subunit. Contacts proteins S8 and S17. May interact with IF1 in the 30S initiation complex.

With S4 and S5 plays an important role in translational accuracy. Its function is as follows. Interacts with and stabilizes bases of the 16S rRNA that are involved in tRNA selection in the A site and with the mRNA backbone. Located at the interface of the 30S and 50S subunits, it traverses the body of the 30S subunit contacting proteins on the other side and probably holding the rRNA structure together. The combined cluster of proteins S8, S12 and S17 appears to hold together the shoulder and platform of the 30S subunit. In Wolbachia pipientis subsp. Culex pipiens (strain wPip), this protein is Small ribosomal subunit protein uS12.